The chain runs to 173 residues: Peptide deformylase (173 aa).

The Fe cation site is built by cysteine 94 and histidine 136. The active site involves glutamate 137. Histidine 140 contacts Fe cation.

This sequence belongs to the polypeptide deformylase family. Fe(2+) is required as a cofactor.

It catalyses the reaction N-terminal N-formyl-L-methionyl-[peptide] + H2O = N-terminal L-methionyl-[peptide] + formate. In terms of biological role, removes the formyl group from the N-terminal Met of newly synthesized proteins. Requires at least a dipeptide for an efficient rate of reaction. N-terminal L-methionine is a prerequisite for activity but the enzyme has broad specificity at other positions. This chain is Peptide deformylase, found in Desulfosudis oleivorans (strain DSM 6200 / JCM 39069 / Hxd3) (Desulfococcus oleovorans).